The primary structure comprises 326 residues: Phospho-N-acetylmuramoyl-pentapeptide-transferase (326 aa).

10 helical membrane passes run 5 to 25, 51 to 71, 82 to 102, 122 to 142, 148 to 168, 180 to 200, 204 to 224, 229 to 249, 252 to 272, and 304 to 324; these read GLLI…PIFI, TPTM…LIMA, VWLL…DDFI, IIIA…TVIY, LQFD…VGAS, LLAG…WYGI, VVAV…VFNA, VFMG…ISIL, LEIL…SVII, and VVTT…YIEV.

This sequence belongs to the glycosyltransferase 4 family. MraY subfamily. It depends on Mg(2+) as a cofactor.

The protein localises to the cell membrane. It catalyses the reaction UDP-N-acetyl-alpha-D-muramoyl-L-alanyl-gamma-D-glutamyl-meso-2,6-diaminopimeloyl-D-alanyl-D-alanine + di-trans,octa-cis-undecaprenyl phosphate = di-trans,octa-cis-undecaprenyl diphospho-N-acetyl-alpha-D-muramoyl-L-alanyl-D-glutamyl-meso-2,6-diaminopimeloyl-D-alanyl-D-alanine + UMP. It participates in cell wall biogenesis; peptidoglycan biosynthesis. Functionally, catalyzes the initial step of the lipid cycle reactions in the biosynthesis of the cell wall peptidoglycan: transfers peptidoglycan precursor phospho-MurNAc-pentapeptide from UDP-MurNAc-pentapeptide onto the lipid carrier undecaprenyl phosphate, yielding undecaprenyl-pyrophosphoryl-MurNAc-pentapeptide, known as lipid I. In Oceanobacillus iheyensis (strain DSM 14371 / CIP 107618 / JCM 11309 / KCTC 3954 / HTE831), this protein is Phospho-N-acetylmuramoyl-pentapeptide-transferase.